Here is a 153-residue protein sequence, read N- to C-terminus: Ribosome maturation factor RimP (153 aa).

It belongs to the RimP family.

It is found in the cytoplasm. Required for maturation of 30S ribosomal subunits. The sequence is that of Ribosome maturation factor RimP from Coxiella burnetii (strain RSA 331 / Henzerling II).